The sequence spans 607 residues: Synaptotagmin-like protein 3 (607 aa).

Residues 4–123 (EVDLESFKEL…IKTGEWFFEE (120 aa)) form the RabBD domain. The interval 221-279 (VGHTERRSQSDTAVNVTSRKASTPDILKAFHQEDPKHPPDPVLKQDTPPSSPTHSAVFS) is disordered. Over residues 230 to 241 (SDTAVNVTSRKA) the composition is skewed to polar residues. Basic and acidic residues predominate over residues 248–259 (KAFHQEDPKHPP). C2 domains follow at residues 305-430 (VTGE…ARWY) and 458-590 (LPAG…LQWH).

In terms of assembly, monomer. Binds NRXN1. Binds RAB27A that has been activated by GTP-binding via its N-terminus. Highly expressed in spleen and lung. Detected at lower levels in heart and testis.

Its subcellular location is the endomembrane system. Its function is as follows. May act as Rab effector protein and play a role in vesicle trafficking. Binds phospholipids in the presence of calcium ions. The sequence is that of Synaptotagmin-like protein 3 (Sytl3) from Mus musculus (Mouse).